Here is a 237-residue protein sequence, read N- to C-terminus: Ribonuclease PH (237 aa).

Phosphate is bound by residues Arg-86 and 124–126; that span reads GTR.

This sequence belongs to the RNase PH family. In terms of assembly, homohexameric ring arranged as a trimer of dimers.

It carries out the reaction tRNA(n+1) + phosphate = tRNA(n) + a ribonucleoside 5'-diphosphate. Its function is as follows. Phosphorolytic 3'-5' exoribonuclease that plays an important role in tRNA 3'-end maturation. Removes nucleotide residues following the 3'-CCA terminus of tRNAs; can also add nucleotides to the ends of RNA molecules by using nucleoside diphosphates as substrates, but this may not be physiologically important. Probably plays a role in initiation of 16S rRNA degradation (leading to ribosome degradation) during starvation. The sequence is that of Ribonuclease PH from Shewanella sp. (strain W3-18-1).